The primary structure comprises 185 residues: Prorelaxin H1 (185 aa).

The first 22 residues, 1 to 22, serve as a signal peptide directing secretion; the sequence is MPRLFLFHLLEFCLLLNQFSRA. Disulfide bonds link cysteine 35/cysteine 172, cysteine 47/cysteine 185, and cysteine 171/cysteine 176. Positions 56–158 are cleaved as a propeptide — connecting peptide; sequence SLSQEDAPQT…KYLGLDTHSQ (103 aa).

Belongs to the insulin family. As to quaternary structure, heterodimer of a B chain and an A chain linked by two disulfide bonds. In terms of tissue distribution, prostate. Not expressed in placenta, decidua or ovary.

The protein resides in the secreted. Functionally, relaxin is an ovarian hormone that acts with estrogen to produce dilatation of the birth canal in many mammals. May be involved in remodeling of connective tissues during pregnancy, promoting growth of pubic ligaments and ripening of the cervix. This Homo sapiens (Human) protein is Prorelaxin H1 (RLN1).